The sequence spans 265 residues: Small ribosomal subunit protein uS2 (265 aa).

The disordered stretch occupies residues 226–265 (AAAPNSASVREEEFSADAADEGKGRRAPAKKGDKKADAAE). Basic and acidic residues predominate over residues 245–265 (DEGKGRRAPAKKGDKKADAAE).

Belongs to the universal ribosomal protein uS2 family.

This chain is Small ribosomal subunit protein uS2, found in Xanthomonas axonopodis pv. citri (strain 306).